A 352-amino-acid chain; its full sequence is Protein O-mannose kinase (352 aa).

Over 1–16 (MERKPSVCRKSGSWNC) the chain is Cytoplasmic. Residues 17–37 (LLVLFLLLLFTVVSVNFLLYM) traverse the membrane as a helical; Signal-anchor for type II membrane protein segment. Topologically, residues 38 to 352 (YIDQMYAPSR…MAVAETREML (315 aa)) are lumenal. The Protein kinase domain maps to 82 to 352 (VRKLKLVGEG…MAVAETREML (271 aa)).

It belongs to the protein kinase superfamily. Ser/Thr protein kinase family. STKL subfamily.

Its subcellular location is the endoplasmic reticulum membrane. It catalyses the reaction 3-O-[beta-D-GalNAc-(1-&gt;3)-beta-D-GlcNAc-(1-&gt;4)-alpha-D-Man]-L-Thr-[protein] + ATP = 3-O-[beta-D-GalNAc-(1-&gt;3)-beta-D-GlcNAc-(1-&gt;4)-(O-6-P-alpha-D-Man)]-Thr-[protein] + ADP + H(+). In terms of biological role, protein O-mannose kinase that specifically mediates phosphorylation at the 6-position of an O-mannose of the trisaccharide (N-acetylgalactosamine (GalNAc)-beta-1,3-N-acetylglucosamine (GlcNAc)-beta-1,4-mannose) to generate phosphorylated O-mannosyl trisaccharide (N-acetylgalactosamine-beta-1,3-N-acetylglucosamine-beta-1,4-(phosphate-6-)mannose). Phosphorylated O-mannosyl trisaccharide is a carbohydrate structure present in alpha-dystroglycan (dag1), which is required for binding laminin G-like domain-containing extracellular proteins with high affinity. Only shows kinase activity when the GalNAc-beta-3-GlcNAc-beta-terminus is linked to the 4-position of O-mannose, suggesting that this disaccharide serves as the substrate recognition motif. This is Protein O-mannose kinase (pomk) from Xenopus laevis (African clawed frog).